A 358-amino-acid polypeptide reads, in one-letter code: Acetylxylan esterase / glucomannan deacetylase (358 aa).

Residues 1–18 (MKLLFPILLLTGSYFLSA) form the signal peptide. A lipid anchor (N-palmitoyl cysteine) is attached at cysteine 19. The S-diacylglycerol cysteine moiety is linked to residue cysteine 19. The active-site Nucleophile is serine 160. Active-site charge relay system residues include aspartate 333 and histidine 335.

This sequence belongs to the carbohydrate esterase 2 (CE2) family.

It localises to the cell membrane. It carries out the reaction Deacetylation of xylans and xylo-oligosaccharides.. It participates in glycan degradation; xylan degradation. Involved in the degradation of plant cell wall polysaccharides. Catalyzes the deacetylation of acetylated birchwood xylan and glucomannan, with equal efficiency, and of the synthetic substrate 4-nitrophenyl acetate (4-NPAc). Does not bind cellulose, cellohexaose and beta-glucan. The protein is Acetylxylan esterase / glucomannan deacetylase of Cellvibrio japonicus (strain Ueda107) (Pseudomonas fluorescens subsp. cellulosa).